We begin with the raw amino-acid sequence, 151 residues long: D-aminoacyl-tRNA deacylase (151 aa).

Residues 142 to 143 carry the Gly-cisPro motif, important for rejection of L-amino acids motif; the sequence is GP.

This sequence belongs to the DTD family. In terms of assembly, homodimer.

The protein resides in the cytoplasm. The catalysed reaction is glycyl-tRNA(Ala) + H2O = tRNA(Ala) + glycine + H(+). It carries out the reaction a D-aminoacyl-tRNA + H2O = a tRNA + a D-alpha-amino acid + H(+). Its function is as follows. An aminoacyl-tRNA editing enzyme that deacylates mischarged D-aminoacyl-tRNAs. Also deacylates mischarged glycyl-tRNA(Ala), protecting cells against glycine mischarging by AlaRS. Acts via tRNA-based rather than protein-based catalysis; rejects L-amino acids rather than detecting D-amino acids in the active site. By recycling D-aminoacyl-tRNA to D-amino acids and free tRNA molecules, this enzyme counteracts the toxicity associated with the formation of D-aminoacyl-tRNA entities in vivo and helps enforce protein L-homochirality. The sequence is that of D-aminoacyl-tRNA deacylase from Psychrobacter cryohalolentis (strain ATCC BAA-1226 / DSM 17306 / VKM B-2378 / K5).